The chain runs to 312 residues: Glyoxylate/hydroxypyruvate reductase A (312 aa).

R227 is an active-site residue. The active-site Proton donor is H275.

It belongs to the D-isomer specific 2-hydroxyacid dehydrogenase family. GhrA subfamily.

It localises to the cytoplasm. It carries out the reaction glycolate + NADP(+) = glyoxylate + NADPH + H(+). It catalyses the reaction (R)-glycerate + NAD(+) = 3-hydroxypyruvate + NADH + H(+). The enzyme catalyses (R)-glycerate + NADP(+) = 3-hydroxypyruvate + NADPH + H(+). Catalyzes the NADPH-dependent reduction of glyoxylate and hydroxypyruvate into glycolate and glycerate, respectively. The sequence is that of Glyoxylate/hydroxypyruvate reductase A from Escherichia coli (strain ATCC 8739 / DSM 1576 / NBRC 3972 / NCIMB 8545 / WDCM 00012 / Crooks).